The chain runs to 281 residues: MAGLVYPQYPVFPGYRQPYRQLPPFYKPKQPYWKPPYKGVPGPMKPTNPLDCLDGYKWAQLKALLSQLGPEFGLGRRFTKEVGVQVNPRVDACIQCSLGPRTLKNCKGGPFLFHAVPGQHAGLGIIAPVRFPRTTAVYSRLSDRRLFTLPTPTYGGKKEGGTQMDPVEEDLLLKRPTFQFLEQKYGFFQCKDCQIRWESAYVWCVSGTNKVYFKQFCHKCQKGHNPYYVESIECKRCKKAWCSCPERRHIDLKRPHCQDLCGRCKGQRLSCDKTFSFKYII.

The 3CxxC-type zinc-finger motif lies at 183–267 (QKYGFFQCKD…QDLCGRCKGQ (85 aa)).

Belongs to the ZAR1 family. In terms of assembly, component of a cytoplasmic ribonucleoprotein complex together with eif4enif1/4E-T and cpeb1. Expressed in oocytes.

The protein localises to the cytoplasm. It localises to the cytoplasmic ribonucleoprotein granule. MRNA-binding protein required for maternal mRNA storage, translation and degradation during oocyte maturation. Controls timing of meiosis during oogenesis. Probably promotes formation of some phase-separated membraneless compartment that stores maternal mRNAs in oocytes: acts by undergoing liquid-liquid phase separation upon binding to maternal mRNAs. Binds to the 3'-UTR of maternal mRNAs, inhibiting their translation. In Xenopus laevis (African clawed frog), this protein is Protein ZAR1-like 1.S.